We begin with the raw amino-acid sequence, 142 residues long: MKTFTAKPETVKRDWYVVDATGKTLGRLATELARRLRGKHKAEYTPHVDTGDYIIVLNAEKVAVTGNKREDKMYYHHTGHIGGIKEATFEEMIARRPERVIEIAVKGMLPKGPLGRAMYRKLKVYAGNEHNHAAQQPQVLDI.

The protein belongs to the universal ribosomal protein uL13 family. In terms of assembly, part of the 50S ribosomal subunit.

Functionally, this protein is one of the early assembly proteins of the 50S ribosomal subunit, although it is not seen to bind rRNA by itself. It is important during the early stages of 50S assembly. This chain is Large ribosomal subunit protein uL13, found in Klebsiella pneumoniae (strain 342).